We begin with the raw amino-acid sequence, 44 residues long: Photosystem I reaction center subunit IX (44 aa).

The helical transmembrane segment at 7 to 27 (YLSVAPVLTTLWFGSLAGLLI) threads the bilayer.

Belongs to the PsaJ family.

Its subcellular location is the plastid. The protein resides in the chloroplast thylakoid membrane. Functionally, may help in the organization of the PsaE and PsaF subunits. The chain is Photosystem I reaction center subunit IX from Drimys granadensis.